A 212-amino-acid polypeptide reads, in one-letter code: Protein HP-25 homolog 1 (212 aa).

The first 34 residues, 1–34 (MPGGRRRVGSMNIAGFWILAQFVLLLVANVKSSA), serve as a signal peptide directing secretion. Positions 36 to 66 (SELCGPRGARGPPGLSGLPGPPGYTGPIGMP) are disordered. The segment covering 40–53 (GPRGARGPPGLSGL) has biased composition (low complexity). The region spanning 40–76 (GPRGARGPPGLSGLPGPPGYTGPIGMPGLTGRPGLPG) is the Collagen-like domain. In terms of domain architecture, C1q spans 82–212 (PPLPQSAFSV…VFYGFLLNGN (131 aa)). N-linked (GlcNAc...) asparagine glycosylation is present at N125.

The protein resides in the secreted. The chain is Protein HP-25 homolog 1 from Bos taurus (Bovine).